Reading from the N-terminus, the 270-residue chain is Imidazole glycerol phosphate synthase subunit HisF (270 aa).

Catalysis depends on residues Asp11 and Asp130.

It belongs to the HisA/HisF family. As to quaternary structure, heterodimer of HisH and HisF.

It is found in the cytoplasm. The catalysed reaction is 5-[(5-phospho-1-deoxy-D-ribulos-1-ylimino)methylamino]-1-(5-phospho-beta-D-ribosyl)imidazole-4-carboxamide + L-glutamine = D-erythro-1-(imidazol-4-yl)glycerol 3-phosphate + 5-amino-1-(5-phospho-beta-D-ribosyl)imidazole-4-carboxamide + L-glutamate + H(+). It participates in amino-acid biosynthesis; L-histidine biosynthesis; L-histidine from 5-phospho-alpha-D-ribose 1-diphosphate: step 5/9. Its function is as follows. IGPS catalyzes the conversion of PRFAR and glutamine to IGP, AICAR and glutamate. The HisF subunit catalyzes the cyclization activity that produces IGP and AICAR from PRFAR using the ammonia provided by the HisH subunit. The sequence is that of Imidazole glycerol phosphate synthase subunit HisF from Chloroflexus aggregans (strain MD-66 / DSM 9485).